Reading from the N-terminus, the 785-residue chain is Adhesion G-protein coupled receptor G7 (785 aa).

Positions 1 to 26 are cleaved as a signal peptide; that stretch reads MRSCRSCNVRVLVAIVCGLLTGIVLG. The Extracellular portion of the chain corresponds to 27 to 435; it reads LGIWRMVIRI…KYPKSLDILS (409 aa). 12 N-linked (GlcNAc...) asparagine glycosylation sites follow: Asn-82, Asn-122, Asn-133, Asn-152, Asn-159, Asn-178, Asn-195, Asn-239, Asn-289, Asn-348, Asn-400, and Asn-408. The GAIN-B domain occupies 271-425; it reads FSVQKGSSNS…AVLMSFKKDY (155 aa). Disulfide bonds link Cys-380–Cys-407 and Cys-395–Cys-409. The GPS stretch occupies residues 380–425; that stretch reads CVYWNFLINDWDTQGCQKTGNTTEFLRCNCSHTTNFAVLMSFKKDY. A helical transmembrane segment spans residues 436-456; the sequence is NIGCALSIAGLALTILFQILT. Topologically, residues 457–465 are cytoplasmic; the sequence is RKIRKTSVT. A helical membrane pass occupies residues 466-486; the sequence is WVLVSLCSSMLIFNLLFVFGI. The Extracellular portion of the chain corresponds to 487–523; the sequence is ENSNKNLKTSDSDINVKPENNKIPESDTIETPNPSCT. The chain crosses the membrane as a helical span at residues 524-544; it reads AIAALLHYFLLVTFTWNGLSA. Over 545-561 the chain is Cytoplasmic; that stretch reads TQLYFLLIRTMKPLPRH. Residues 562–582 form a helical membrane-spanning segment; it reads FIIFISLVGWGVPAIIVGVTI. Residues 583-623 are Extracellular-facing; that stretch reads GSIYALSGNKRYWELDYRQEEICWLAVPKDNDYARSPLLWS. A helical transmembrane segment spans residues 624-644; the sequence is FIIPVTIILITNITIFVIITV. Over 645 to 668 the chain is Cytoplasmic; the sequence is KVLWKNNQNLTSTKKVSSLKKVFS. Residues 669–689 form a helical membrane-spanning segment; that stretch reads TLSIAVVFGVTWILAYAMLIS. The Extracellular segment spans residues 690–694; sequence NDDIR. Residues 695-715 form a helical membrane-spanning segment; that stretch reads IVFSYIFCLFNTTQGLQIFIL. Residues 716–785 are Cytoplasmic-facing; sequence YTVRTKVFQS…SGMTEETSLS (70 aa).

This sequence belongs to the G-protein coupled receptor 2 family. Adhesion G-protein coupled receptor (ADGR) subfamily. As to expression, selectively expressed in the intestinal tissues.

It is found in the membrane. Its function is as follows. Orphan receptor. This is Adhesion G-protein coupled receptor G7 (Adgrg7) from Mus musculus (Mouse).